The primary structure comprises 348 residues: Dihydroorotase (348 aa).

Residues His-17 and His-19 each contribute to the Zn(2+) site. Substrate is bound by residues His-19–Arg-21 and Asn-45. Zn(2+) is bound by residues Lys-103, His-140, and His-178. Position 103 is an N6-carboxylysine (Lys-103). His-140 is a binding site for substrate. Leu-223 contributes to the substrate binding site. Asp-251 is a Zn(2+) binding site. Asp-251 is a catalytic residue. Residues His-255 and Ala-267 each coordinate substrate.

Belongs to the metallo-dependent hydrolases superfamily. DHOase family. Class II DHOase subfamily. Homodimer. It depends on Zn(2+) as a cofactor.

The catalysed reaction is (S)-dihydroorotate + H2O = N-carbamoyl-L-aspartate + H(+). Its pathway is pyrimidine metabolism; UMP biosynthesis via de novo pathway; (S)-dihydroorotate from bicarbonate: step 3/3. Its function is as follows. Catalyzes the reversible cyclization of carbamoyl aspartate to dihydroorotate. In Yersinia enterocolitica serotype O:8 / biotype 1B (strain NCTC 13174 / 8081), this protein is Dihydroorotase.